Consider the following 171-residue polypeptide: Adenine phosphoribosyltransferase (171 aa).

It belongs to the purine/pyrimidine phosphoribosyltransferase family. As to quaternary structure, homodimer.

It localises to the cytoplasm. The enzyme catalyses AMP + diphosphate = 5-phospho-alpha-D-ribose 1-diphosphate + adenine. The protein operates within purine metabolism; AMP biosynthesis via salvage pathway; AMP from adenine: step 1/1. Catalyzes a salvage reaction resulting in the formation of AMP, that is energically less costly than de novo synthesis. In Geotalea daltonii (strain DSM 22248 / JCM 15807 / FRC-32) (Geobacter daltonii), this protein is Adenine phosphoribosyltransferase.